The following is a 727-amino-acid chain: NADH-ubiquinone oxidoreductase 75 kDa subunit, mitochondrial (727 aa).

Residues 1–23 constitute a mitochondrion transit peptide; sequence MLRIPIKRALIGLSNSPKGYVRT. The region spanning 30-108 is the 2Fe-2S ferredoxin-type domain; it reads NLIEVFVDGQ…GWNILTNSEK (79 aa). [2Fe-2S] cluster is bound by residues cysteine 64, cysteine 75, and cysteine 78. Lysine 84 carries the N6-acetyllysine modification. Cysteine 92 lines the [2Fe-2S] cluster pocket. Positions 108-147 constitute a 4Fe-4S His(Cys)3-ligated-type domain; it reads KSKKAREGVMEFLLANHPLDCPICDQGGECDLQDQSMMFG. 8 residues coordinate [4Fe-4S] cluster: histidine 124, cysteine 128, cysteine 131, cysteine 137, cysteine 176, cysteine 179, cysteine 182, and cysteine 226. The 4Fe-4S Mo/W bis-MGD-type domain maps to 245–301; sequence TRKTESIDVMDAVGSNIVVSTRTGEVMRILPRMHEDINEEWISDKTRFAYDGLKRQR. At serine 461 the chain carries Phosphoserine. Lysine 467, lysine 499, and lysine 709 each carry N6-acetyllysine.

This sequence belongs to the complex I 75 kDa subunit family. In terms of assembly, core subunit of respiratory chain NADH dehydrogenase (Complex I) which is composed of 45 different subunits. This is the largest subunit of complex I and it is a component of the iron-sulfur (IP) fragment of the enzyme. Complex I associates with ubiquinol-cytochrome reductase complex (Complex III) to form supercomplexes. In astrocytes, less complex I is assembled into supercomplexes as compared to neurons. Interacts with MDM2. Interacts with AKAP1. It depends on [2Fe-2S] cluster as a cofactor. [4Fe-4S] cluster serves as cofactor. In terms of processing, acetylation of Lys-84 is observed in liver mitochondria from fasted mice but not from fed mice. In terms of tissue distribution, brain. More abundant in neurons than in astrocytes (at protein level).

The protein localises to the mitochondrion inner membrane. The enzyme catalyses a ubiquinone + NADH + 5 H(+)(in) = a ubiquinol + NAD(+) + 4 H(+)(out). In terms of biological role, core subunit of the mitochondrial membrane respiratory chain NADH dehydrogenase (Complex I) which catalyzes electron transfer from NADH through the respiratory chain, using ubiquinone as an electron acceptor. Essential for catalysing the entry and efficient transfer of electrons within complex I. Plays a key role in the assembly and stability of complex I and participates in the association of complex I with ubiquinol-cytochrome reductase complex (Complex III) to form supercomplexes. This Mus musculus (Mouse) protein is NADH-ubiquinone oxidoreductase 75 kDa subunit, mitochondrial (Ndufs1).